Reading from the N-terminus, the 229-residue chain is MKKTSRRLKTLKSKVDPKLYSLNEAVTILRATSNAKFKETAEAHISLGLNPKYADQQLRATVILPKGTGKLVKVAVIAKGEKLTEAMNAGADISGSEELIDEISKGRLDFDKLIATPDIMPLIAKLGRVLGPRGLMPSPKAGTVTLDITKSINEFKGGKVEYRVDRTGIIHVPFGKSSFPEEDLVMNLQTIKDSIDKNKPSGSKGKYWKTFFLSSTMGPSIQIDITSLL.

The protein belongs to the universal ribosomal protein uL1 family. Part of the 50S ribosomal subunit.

The protein resides in the plastid. Its subcellular location is the chloroplast. Binds directly to 23S rRNA. Might be involved in E site tRNA release (Potential). In Porphyra purpurea (Red seaweed), this protein is Large ribosomal subunit protein uL1c (rpl1).